A 507-amino-acid polypeptide reads, in one-letter code: O-fucosyltransferase 30 (507 aa).

The helical; Signal-anchor for type II membrane protein transmembrane segment at 26–46 (AIFLCSVSILVVFFIVVFFIT) threads the bilayer. N-linked (GlcNAc...) asparagine glycosylation is found at asparagine 110, asparagine 146, asparagine 398, and asparagine 410.

This sequence belongs to the glycosyltransferase GT106 family.

It is found in the membrane. It participates in glycan metabolism. The polypeptide is O-fucosyltransferase 30 (Arabidopsis thaliana (Mouse-ear cress)).